Consider the following 307-residue polypeptide: Protease HtpX homolog 1 (307 aa).

Transmembrane regions (helical) follow at residues 7–27 (LKTLMFLSGTLTIIAEGIITY) and 38–60 (IFTAIFLVILWLIQWLIAPYLVG). Zn(2+) is bound at residue His-133. Glu-134 is an active-site residue. His-137 contributes to the Zn(2+) binding site. The next 2 membrane-spanning stretches (helical) occupy residues 145–165 (IGMALGLIPTIIGYVGNFLLF) and 180–200 (LILGLAMLAIGGVLFVLTFLL). Residue Glu-212 participates in Zn(2+) binding.

It belongs to the peptidase M48B family. Zn(2+) is required as a cofactor.

It is found in the cell membrane. This chain is Protease HtpX homolog 1, found in Sulfolobus acidocaldarius (strain ATCC 33909 / DSM 639 / JCM 8929 / NBRC 15157 / NCIMB 11770).